The following is a 136-amino-acid chain: Regulator of nucleoside diphosphate kinase (136 aa).

Belongs to the Rnk family. As to quaternary structure, interacts with the RNA polymerase.

May act as an anti-Gre factor. In Escherichia coli O6:H1 (strain CFT073 / ATCC 700928 / UPEC), this protein is Regulator of nucleoside diphosphate kinase.